The sequence spans 266 residues: Glucosamine-6-phosphate deaminase (266 aa).

The active-site Proton acceptor; for enolization step is Asp72. The active-site For ring-opening step is Asp141. The Proton acceptor; for ring-opening step role is filled by His143. Glu148 functions as the For ring-opening step in the catalytic mechanism.

It belongs to the glucosamine/galactosamine-6-phosphate isomerase family. NagB subfamily. As to quaternary structure, homohexamer.

The catalysed reaction is alpha-D-glucosamine 6-phosphate + H2O = beta-D-fructose 6-phosphate + NH4(+). It functions in the pathway amino-sugar metabolism; N-acetylneuraminate degradation; D-fructose 6-phosphate from N-acetylneuraminate: step 5/5. Its activity is regulated as follows. Allosterically activated by N-acetylglucosamine 6-phosphate (GlcNAc6P). Its function is as follows. Catalyzes the reversible isomerization-deamination of glucosamine 6-phosphate (GlcN6P) to form fructose 6-phosphate (Fru6P) and ammonium ion. This chain is Glucosamine-6-phosphate deaminase, found in Citrobacter koseri (strain ATCC BAA-895 / CDC 4225-83 / SGSC4696).